Reading from the N-terminus, the 428-residue chain is Serine--tRNA ligase (428 aa).

235–237 (TAE) provides a ligand contact to L-serine. 266-268 (RSE) is a binding site for ATP. An L-serine-binding site is contributed by Glu-289. 353–356 (EISS) is a binding site for ATP. Ser-389 provides a ligand contact to L-serine.

It belongs to the class-II aminoacyl-tRNA synthetase family. Type-1 seryl-tRNA synthetase subfamily. As to quaternary structure, homodimer. The tRNA molecule binds across the dimer.

It is found in the cytoplasm. The catalysed reaction is tRNA(Ser) + L-serine + ATP = L-seryl-tRNA(Ser) + AMP + diphosphate + H(+). The enzyme catalyses tRNA(Sec) + L-serine + ATP = L-seryl-tRNA(Sec) + AMP + diphosphate + H(+). The protein operates within aminoacyl-tRNA biosynthesis; selenocysteinyl-tRNA(Sec) biosynthesis; L-seryl-tRNA(Sec) from L-serine and tRNA(Sec): step 1/1. Functionally, catalyzes the attachment of serine to tRNA(Ser). Is also able to aminoacylate tRNA(Sec) with serine, to form the misacylated tRNA L-seryl-tRNA(Sec), which will be further converted into selenocysteinyl-tRNA(Sec). In Shewanella amazonensis (strain ATCC BAA-1098 / SB2B), this protein is Serine--tRNA ligase.